The following is a 445-amino-acid chain: Chromosome partition protein MukF (445 aa).

The segment at 213 to 241 (LSETSNTLKELQDTLQAAGDELQTQILDI) is leucine-zipper.

The protein belongs to the MukF family. In terms of assembly, interacts, and probably forms a ternary complex, with MukE and MukB via its C-terminal region. The complex formation is stimulated by calcium or magnesium. It is required for an interaction between MukE and MukB.

It is found in the cytoplasm. It localises to the nucleoid. In terms of biological role, involved in chromosome condensation, segregation and cell cycle progression. May participate in facilitating chromosome segregation by condensation DNA from both sides of a centrally located replisome during cell division. Not required for mini-F plasmid partitioning. Probably acts via its interaction with MukB and MukE. Overexpression results in anucleate cells. It has a calcium binding activity. This is Chromosome partition protein MukF from Vibrio vulnificus (strain YJ016).